The sequence spans 299 residues: Zinc-alpha-2-glycoprotein (299 aa).

A signal peptide spans 1-17; that stretch reads MVPVLLALLLLLGPAVS. Residues N24, N125, and N256 are each glycosylated (N-linked (GlcNAc...) asparagine). 2 disulfides stabilise this stretch: C120–C183 and C222–C277. One can recognise an Ig-like C1-type domain in the interval 204–289; the sequence is PSVSVTGHAA…EHRSLTRPLT (86 aa).

It belongs to the MHC class I family. In terms of assembly, interacts with PIP.

The protein resides in the secreted. Stimulates lipid degradation in adipocytes and causes the extensive fat losses associated with some advanced cancers. The sequence is that of Zinc-alpha-2-glycoprotein (AZGP1) from Bos taurus (Bovine).